A 288-amino-acid chain; its full sequence is Chitinase 5 (288 aa).

The first 29 residues, 1-29 (MANSPTPTMLAFLALGLALLLSATGQASA), serve as a signal peptide directing secretion. Positions 30–64 (QNCGCQSNMCCSKWGYCGTGKDYCGDGCRSGPCYG) constitute a Chitin-binding type-1 domain. Disulfide bonds link C32–C40, C34–C46, C39–C53, C57–C62, C107–C156, C169–C178, and C256–C288. E151 acts as the Proton donor in catalysis.

It belongs to the glycosyl hydrolase 19 family. Chitinase class IV subfamily. Expressed in sheaths and meristems and at lower levels in roots and leaves.

It catalyses the reaction Random endo-hydrolysis of N-acetyl-beta-D-glucosaminide (1-&gt;4)-beta-linkages in chitin and chitodextrins.. Its function is as follows. May function in reproductive organs during embryogenesis and seed maturation. The polypeptide is Chitinase 5 (Cht5) (Oryza sativa subsp. japonica (Rice)).